A 273-amino-acid chain; its full sequence is UPF0173 metal-dependent hydrolase Bpro_4324 (273 aa).

It belongs to the UPF0173 family.

This is UPF0173 metal-dependent hydrolase Bpro_4324 from Polaromonas sp. (strain JS666 / ATCC BAA-500).